We begin with the raw amino-acid sequence, 509 residues long: MSIKTEEISSLIKKQLEGYQDDLAAEEVGTVTYIGDGIARATGLENAMANELLQFSNGSYGMALNLETNDVGIIILGDFDEIREGDQVKRTGRIMEVPVGDAMIGRVVNSLGQPVDGLGAIKTDKTRPIEFKAPGVMQRKSVSEPLQTGLKAIDALVPIGRGQRELIIGDRKTGKTSIAIDTILNQKDQNMICVYVAIGQKDSTVRAQVETLKKYGAMDYTIVLTAGPSEPAPMLYIAPYAGAAMGEEFMYNGKHVLIVYDDLSKQATSYRELSLLLRRPPGREAYPGDIFYTHSRLLERAAKLSDKLGGGSMTALPVIETQAGDISAYIPTNVISITDGQIFLQSDLFYAGTRPAIDAGASVSRVGGDAQVKAMKKVAGTLRLDLASFRELEAFTQFGSDLDAATQAKLNRGRRTVEVLKQPVHKPLPVEKQVIILYALTHGFLDPIPIEDITRFQDELFDFFDSNAADLLKQIRDTGNLPDTDKLDAQIKAFAGGFQTSKQLAAAKD.

169 to 176 serves as a coordination point for ATP; the sequence is GDRKTGKT.

This sequence belongs to the ATPase alpha/beta chains family. As to quaternary structure, F-type ATPases have 2 components, CF(1) - the catalytic core - and CF(0) - the membrane proton channel. CF(1) has five subunits: alpha(3), beta(3), gamma(1), delta(1), epsilon(1). CF(0) has three main subunits: a(1), b(2) and c(9-12). The alpha and beta chains form an alternating ring which encloses part of the gamma chain. CF(1) is attached to CF(0) by a central stalk formed by the gamma and epsilon chains, while a peripheral stalk is formed by the delta and b chains.

It is found in the cell membrane. It carries out the reaction ATP + H2O + 4 H(+)(in) = ADP + phosphate + 5 H(+)(out). Functionally, produces ATP from ADP in the presence of a proton gradient across the membrane. The alpha chain is a regulatory subunit. The protein is ATP synthase subunit alpha of Lacticaseibacillus casei (strain BL23) (Lactobacillus casei).